The primary structure comprises 578 residues: DNA polymerase III subunit gamma/tau (578 aa).

An ATP-binding site is contributed by 42–49 (GPRGCGKT). Zn(2+)-binding residues include Cys61, Cys70, Cys73, and Cys76. Disordered regions lie at residues 389–423 (APQA…ASSE) and 525–559 (AVNP…RDPE). Composition is skewed to basic and acidic residues over residues 402–412 (EPKHQPAREPR) and 536–559 (QRDE…RDPE).

The protein belongs to the DnaX/STICHEL family. As to quaternary structure, DNA polymerase III contains a core (composed of alpha, epsilon and theta chains) that associates with a tau subunit. This core dimerizes to form the POLIII' complex. PolIII' associates with the gamma complex (composed of gamma, delta, delta', psi and chi chains) and with the beta chain to form the complete DNA polymerase III complex.

The enzyme catalyses DNA(n) + a 2'-deoxyribonucleoside 5'-triphosphate = DNA(n+1) + diphosphate. In terms of biological role, DNA polymerase III is a complex, multichain enzyme responsible for most of the replicative synthesis in bacteria. This DNA polymerase also exhibits 3' to 5' exonuclease activity. The polypeptide is DNA polymerase III subunit gamma/tau (dnaX) (Mycobacterium bovis (strain ATCC BAA-935 / AF2122/97)).